We begin with the raw amino-acid sequence, 798 residues long: Cation channel sperm-associated auxiliary subunit delta (798 aa).

The first 20 residues, 1–20 (MLMLMLVAAVTMWLRPLVTA), serve as a signal peptide directing secretion. Over 21–723 (QLCRSRTVRT…AFPVQLVSAG (703 aa)) the chain is Extracellular. 7 disulfide bridges follow: cysteine 23-cysteine 369, cysteine 59-cysteine 145, cysteine 144-cysteine 152, cysteine 387-cysteine 496, cysteine 510-cysteine 701, cysteine 525-cysteine 572, and cysteine 624-cysteine 652. Asparagine 123 is a glycosylation site (N-linked (GlcNAc...) asparagine). 5 N-linked (GlcNAc...) asparagine glycosylation sites follow: asparagine 230, asparagine 240, asparagine 472, asparagine 538, and asparagine 630. Residues 724–745 (VVILLIISSILGSVWLAYKTPK) form a helical membrane-spanning segment. Residues 746–798 (LLRTARGRRIKKCATQLCRRCKTVCQFRASATARAGTEPPGRHRTPHGGRSDH) are Cytoplasmic-facing.

The protein belongs to the CATSPERD family. In terms of assembly, component of the CatSper complex or CatSpermasome composed of the core pore-forming members CATSPER1, CATSPER2, CATSPER3 and CATSPER4 as well as auxiliary members CATSPERB, CATSPERG, CATSPERD, CATSPERE, CATSPERZ, C2CD6/CATSPERT, TMEM249, TMEM262 and EFCAB9. HSPA1 may be an additional auxiliary complex member. The core complex members CATSPER1, CATSPER2, CATSPER3 and CATSPER4 form a heterotetrameric channel. The auxiliary CATSPERB, CATSPERG, CATSPERD and CATSPERE subunits form a pavilion-like structure over the pore which stabilizes the complex through interactions with CATSPER4, CATSPER3, CATSPER1 and CATSPER2 respectively. TMEM262/CATSPERH interacts with CATSPERB, further stabilizing the complex. C2CD6/CATSPERT interacts at least with CATSPERD and is required for targeting the CatSper complex in the flagellar membrane.

The protein resides in the cell projection. Its subcellular location is the cilium. The protein localises to the flagellum membrane. In terms of biological role, auxiliary component of the CatSper complex, a complex involved in sperm cell hyperactivation. Sperm cell hyperactivation is needed for sperm motility which is essential late in the preparation of sperm for fertilization. Required for CATSPER1 stability before intraflagellar transport and/or incorporation of the CatSper complex channel into the flagellar membrane. The chain is Cation channel sperm-associated auxiliary subunit delta from Homo sapiens (Human).